The chain runs to 573 residues: Protein translocase subunit SecD (573 aa).

Residues 13 to 33 (YLSVFLVMLIGIYLLVFFTGD) form a helical membrane-spanning segment. The tract at residues 127 to 200 (AQPAAEEPQP…PPAEAPATDP (74 aa)) is disordered. Pro residues-rich tracts occupy residues 135–154 (QPAPSAEPQPPGQPAAPPPA) and 161–194 (SPQPGAQPRPYPQDPAPSPNPTSPASPPPAPPAE). Transmembrane regions (helical) follow at residues 385–405 (AGMIAGAIGLLLVLVYSLLYY), 410–430 (LLTALSLVASGSMVFAILVLL), 441–461 (AGIAGLIIGIGTTADSFVVFF), 489–509 (IVSGNAVTFLAAAVLYFLAIG), and 514–534 (FAFTLGLTTILDLVVVFLVTW).

It belongs to the SecD/SecF family. SecD subfamily. In terms of assembly, forms a complex with SecF. Part of the essential Sec protein translocation apparatus which comprises SecA, SecYEG and auxiliary proteins SecDF. Other proteins may also be involved.

Its subcellular location is the cell membrane. Its function is as follows. Part of the Sec protein translocase complex. Interacts with the SecYEG preprotein conducting channel. SecDF uses the proton motive force (PMF) to complete protein translocation after the ATP-dependent function of SecA. In Mycobacterium tuberculosis (strain CDC 1551 / Oshkosh), this protein is Protein translocase subunit SecD.